The sequence spans 523 residues: Signal peptide peptidase-like 2A (523 aa).

The N-terminal stretch at 1-25 is a signal peptide; that stretch reads MGLLHSLHAPAAALLWSCLLGLAAA. Topologically, residues 26–175 are lumenal; the sequence is QEAILHASTN…PSWPNFDYTL (150 aa). Residues N51, N61, N69, N119, N129, and N135 are each glycosylated (N-linked (GlcNAc...) asparagine). The PA domain maps to 70–155; it reads LTGTALCHLS…KDFKDMKETL (86 aa). The helical transmembrane segment at 176–196 threads the bilayer; sequence VVIFVIAVFTVALGGYWSGLI. Residues 197 to 224 are Cytoplasmic-facing; that stretch reads ELENMKSVEDAEDRETRKKKDDYLTFSP. Residues 225 to 245 traverse the membrane as a helical segment; it reads LTVVVFVVICCIMIVLLYFFY. The Lumenal portion of the chain corresponds to 246-247; the sequence is RW. Residues 248–268 traverse the membrane as a helical segment; the sequence is LVYVMIAIFCIASSMSLYNCL. The Cytoplasmic segment spans residues 269–288; that stretch reads SALIHRMPCGQCTILCCGKN. The chain crosses the membrane as a helical span at residues 289-309; that stretch reads IKVSLIFLSGLCISVAVVWAV. Residues 310 to 315 lie on the Lumenal side of the membrane; that stretch reads FRNEDR. The helical transmembrane segment at 316–336 threads the bilayer; sequence WAWILQDILGIAFCLNLIKTM. Topologically, residues 337–344 are cytoplasmic; sequence KLPNFMSC. Residues 345–365 traverse the membrane as a helical segment; that stretch reads VILLGLLLIYDVFFVFITPFI. Residue D355 is part of the active site. Residues 366–403 are Lumenal-facing; the sequence is TKNGESIMVELAAGPFENAEKLPVVIRVPKLMGYSVMS. The chain crosses the membrane as a helical span at residues 404 to 424; the sequence is VCSVPVSVLGFGDIIVPGLLI. Residue D416 is part of the active site. Residues 425–440 are Cytoplasmic-facing; sequence AYCRRFDVQTGSSIYY. The chain crosses the membrane as a helical span at residues 441 to 461; sequence ISSTIAYAVGMIITFVVLMVM. Over 462–463 the chain is Lumenal; that stretch reads KT. Residues 464 to 484 form a helical membrane-spanning segment; it reads GQPALLYLVPCTLITVSVVAW. Positions 466-468 match the PAL motif; sequence PAL. The Cytoplasmic portion of the chain corresponds to 485–523; sequence SRKEMKKFWKGSSYQVMDHLDYSTNEENPVTTDEQIVQQ. The YXXo lysosomal targeting motif motif lies at 498–501; the sequence is YQVM.

Belongs to the peptidase A22B family. Interacts with ITM2B. In terms of processing, glycosylated.

It is found in the late endosome membrane. Its subcellular location is the lysosome membrane. The protein resides in the membrane. Functionally, intramembrane-cleaving aspartic protease (I-CLiP) that cleaves type II membrane signal peptides in the hydrophobic plane of the membrane. Functions in FASLG, ITM2B and TNF processing. Catalyzes the intramembrane cleavage of the anchored fragment of shed TNF-alpha (TNF), which promotes the release of the intracellular domain (ICD) for signaling to the nucleus. Also responsible for the intramembrane cleavage of Fas antigen ligand FASLG, which promotes the release of the intracellular FasL domain (FasL ICD). Essential for degradation of the invariant chain CD74 that plays a central role in the function of antigen-presenting cells in the immune system. Plays a role in the regulation of innate and adaptive immunity. In Mus musculus (Mouse), this protein is Signal peptide peptidase-like 2A.